Reading from the N-terminus, the 368-residue chain is Phospho-N-acetylmuramoyl-pentapeptide-transferase (368 aa).

The next 9 helical transmembrane spans lie at 30–50 (AAAI…IKYL), 72–92 (LPTM…LLWS), 95–115 (IDPH…IGFI), 139–159 (VTLG…SVLL), 169–189 (YLTI…ITAV), 208–228 (AIVV…VYAV), 238–258 (GGEI…FLWF), 264–286 (EIIM…ALLI), and 345–365 (KIVI…LMTL).

The protein belongs to the glycosyltransferase 4 family. MraY subfamily. Mg(2+) is required as a cofactor.

The protein localises to the cell inner membrane. It carries out the reaction UDP-N-acetyl-alpha-D-muramoyl-L-alanyl-gamma-D-glutamyl-meso-2,6-diaminopimeloyl-D-alanyl-D-alanine + di-trans,octa-cis-undecaprenyl phosphate = di-trans,octa-cis-undecaprenyl diphospho-N-acetyl-alpha-D-muramoyl-L-alanyl-D-glutamyl-meso-2,6-diaminopimeloyl-D-alanyl-D-alanine + UMP. The protein operates within cell wall biogenesis; peptidoglycan biosynthesis. Its function is as follows. Catalyzes the initial step of the lipid cycle reactions in the biosynthesis of the cell wall peptidoglycan: transfers peptidoglycan precursor phospho-MurNAc-pentapeptide from UDP-MurNAc-pentapeptide onto the lipid carrier undecaprenyl phosphate, yielding undecaprenyl-pyrophosphoryl-MurNAc-pentapeptide, known as lipid I. In Pelodictyon phaeoclathratiforme (strain DSM 5477 / BU-1), this protein is Phospho-N-acetylmuramoyl-pentapeptide-transferase.